A 719-amino-acid chain; its full sequence is NF-kappa-B inhibitor zeta (719 aa).

The span at 46 to 81 shows a compositional bias: low complexity; sequence GACDGGCSASGPSAPGSPGSDSSDFSSASSVSSCGA. Residues 46-97 are disordered; it reads GACDGGCSASGPSAPGSPGSDSSDFSSASSVSSCGAVESRPRGGARAERLQV. A compositionally biased stretch (basic and acidic residues) spans 84–97; sequence SRPRGGARAERLQV. Residues 108-130 form the OCA domain; it reads RGPFQGVRVKNSVKELLLHIRSH. The Nuclear localization signal signature appears at 164–179; the sequence is KRKGSDSLSDGPACKR. Disordered stretches follow at residues 188-210 and 289-343; these read LTPP…ESKQ and YSPQ…FAPL. The span at 201–210 shows a compositional bias: basic and acidic residues; it reads EDVHHNESKQ. The interval 322-394 is required for transcriptional activity; sequence SYEPHLFGRE…LARPDASSTP (73 aa). Positions 405–719 are interaction with NFKB1/p50; it reads GGNPMSTTQL…KSIQQRAPPY (315 aa). ANK repeat units lie at residues 444–473, 480–509, 513–542, 552–581, 583–608, 613–642, and 649–682; these read DGDT…ALHM, NGQS…QVNT, WGRT…GSNQ, DGLT…HSPE, QELL…AVEA, SGRT…CLSF, and NGNT…DPST.

Interacts with NFKB1/p50. Interacts with RELA. Interacts with AKIRIN2.

It localises to the nucleus. Its function is as follows. Involved in regulation of NF-kappa-B transcription factor complexes. Inhibits NF-kappa-B activity without affecting its nuclear translocation upon stimulation. Inhibits DNA-binding of RELA and NFKB1/p50, and of the NF-kappa-B p65-p50 heterodimer and the NF-kappa-B p50-p50 homodimer. Also seems to activate NF-kappa-B-mediated transcription. In vitro, upon association with NFKB1/p50 has transcriptional activation activity and, together with NFKB1/p50 and RELA, is recruited to LCN2 promoters. Promotes transcription of LCN2 and DEFB4. Is recruited to IL-6 promoters and activates IL-6 but decreases TNF-alpha production in response to LPS. Seems to be involved in the induction of inflammatory genes activated through TLR/IL-1 receptor signaling. Involved in the induction of T helper 17 cells (Th17) differentiation upon recognition of antigen by T cell antigen receptor (TCR). This is NF-kappa-B inhibitor zeta (NFKBIZ) from Bos taurus (Bovine).